Reading from the N-terminus, the 345-residue chain is Anthranilate phosphoribosyltransferase (345 aa).

Residues G84, 87–88, T92, 94–97, 112–120, and S124 each bind 5-phospho-alpha-D-ribose 1-diphosphate; these read GD, NIST, and KHGNRSVSS. G84 is a binding site for anthranilate. S96 is a binding site for Mg(2+). N115 contacts anthranilate. R170 serves as a coordination point for anthranilate. Mg(2+) contacts are provided by D229 and E230.

This sequence belongs to the anthranilate phosphoribosyltransferase family. Homodimer. The cofactor is Mg(2+).

It carries out the reaction N-(5-phospho-beta-D-ribosyl)anthranilate + diphosphate = 5-phospho-alpha-D-ribose 1-diphosphate + anthranilate. It participates in amino-acid biosynthesis; L-tryptophan biosynthesis; L-tryptophan from chorismate: step 2/5. Its function is as follows. Catalyzes the transfer of the phosphoribosyl group of 5-phosphorylribose-1-pyrophosphate (PRPP) to anthranilate to yield N-(5'-phosphoribosyl)-anthranilate (PRA). The sequence is that of Anthranilate phosphoribosyltransferase from Xanthomonas euvesicatoria pv. vesicatoria (strain 85-10) (Xanthomonas campestris pv. vesicatoria).